The sequence spans 223 residues: Cytidylate kinase (223 aa).

Residue 11–19 (GPAGVGKST) participates in ATP binding.

The protein belongs to the cytidylate kinase family. Type 1 subfamily.

Its subcellular location is the cytoplasm. The enzyme catalyses CMP + ATP = CDP + ADP. It carries out the reaction dCMP + ATP = dCDP + ADP. In Maridesulfovibrio salexigens (strain ATCC 14822 / DSM 2638 / NCIMB 8403 / VKM B-1763) (Desulfovibrio salexigens), this protein is Cytidylate kinase.